We begin with the raw amino-acid sequence, 647 residues long: Homologous recombination OB-fold protein (647 aa).

At serine 47 the chain carries Phosphoserine. 3 disordered regions span residues 284-361 (ARGT…GPQG), 380-399 (SRTPQQPTHPSTRAKTRRFP), and 581-631 (SFLK…DDLD). An asymmetric dimethylarginine mark is found at arginine 285, arginine 295, arginine 329, and arginine 337. Over residues 287-308 (TIQSSPQNRFPCQPFQSPSSWL) the composition is skewed to polar residues. The segment covering 319 to 332 (TPNSSCSTPSRTSS) has biased composition (low complexity). Positions 380–390 (SRTPQQPTHPS) are enriched in polar residues. The span at 618–631 (ASPEEELPEADDLD) shows a compositional bias: acidic residues.

As to quaternary structure, interacts with MCM8; this interaction is necessary for MCM8-MCM9 helicase complex recruitment to DNA damage sites. Interacts with RPA1; this interaction associates HROB with the RPA complex.

The protein localises to the nucleus. The protein resides in the chromosome. Its function is as follows. DNA-binding protein involved in homologous recombination that acts by recruiting the MCM8-MCM9 helicase complex to sites of DNA damage to promote DNA repair synthesis. In Homo sapiens (Human), this protein is Homologous recombination OB-fold protein.